We begin with the raw amino-acid sequence, 347 residues long: Probable cytosolic iron-sulfur protein assembly protein 1 (347 aa).

7 WD repeats span residues 11–48, 62–101, 122–161, 168–207, 212–255, 266–304, and 311–347; these read LHNE…DGLV, SHKK…GDAD, GHEN…EEYE, EHSQ…WEAA, GHEG…SIEE, VHGK…VWEV, and SHSI…WAYN.

This sequence belongs to the WD repeat CIA1 family. Interacts with NAR1.

Its subcellular location is the cytoplasm. The protein resides in the nucleus. Essential component of the cytosolic iron-sulfur (Fe/S) protein assembly machinery. Required for the maturation of extramitochondrial Fe/S proteins. This is Probable cytosolic iron-sulfur protein assembly protein 1 from Vanderwaltozyma polyspora (strain ATCC 22028 / DSM 70294 / BCRC 21397 / CBS 2163 / NBRC 10782 / NRRL Y-8283 / UCD 57-17) (Kluyveromyces polysporus).